We begin with the raw amino-acid sequence, 517 residues long: Aldehyde dehydrogenase X, mitochondrial (517 aa).

The N-terminal 17 residues, Met-1–Ala-17, are a transit peptide targeting the mitochondrion. Lys-51 bears the N6-acetyllysine mark. Lys-52 carries the N6-acetyllysine; alternate modification. Lys-52 bears the N6-succinyllysine; alternate mark. An N6-succinyllysine modification is found at Lys-81. Gly-262–Gly-267 is a binding site for NAD(+). Glu-285 functions as the Proton acceptor in the catalytic mechanism. Residue Cys-319 is the Nucleophile of the active site. N6-acetyllysine; alternate occurs at positions 364, 383, 399, 414, and 426. 5 positions are modified to N6-succinyllysine; alternate: Lys-364, Lys-383, Lys-399, Lys-414, and Lys-426. Residue Lys-429 is modified to N6-acetyllysine.

It belongs to the aldehyde dehydrogenase family. As to quaternary structure, homotetramer.

It localises to the mitochondrion matrix. The enzyme catalyses an aldehyde + NAD(+) + H2O = a carboxylate + NADH + 2 H(+). It functions in the pathway alcohol metabolism; ethanol degradation; acetate from ethanol: step 2/2. ALDHs play a major role in the detoxification of alcohol-derived acetaldehyde. They are involved in the metabolism of corticosteroids, biogenic amines, neurotransmitters, and lipid peroxidation. The polypeptide is Aldehyde dehydrogenase X, mitochondrial (ALDH1B1) (Pongo abelii (Sumatran orangutan)).